The following is a 373-amino-acid chain: Glutamine synthetase (373 aa).

Alanine 2 is modified (N-acetylalanine). The segment at 2–25 (ATSASSHLNKGIKQVYMSLPQGEK) is required for glutamine-induced ubiquitination by CRL4(CRBN) and proteasomal degradation. N6-acetyllysine occurs at positions 11 and 14. In terms of domain architecture, GS beta-grasp spans 24–106 (EKVQAMYIWI…VFCEVFKYNR (83 aa)). Tyrosine 104 carries the post-translational modification Phosphotyrosine. In terms of domain architecture, GS catalytic spans 113–373 (LRHTCKRIMD…TGDEPFQYKN (261 aa)). Glutamate 134 lines the ATP pocket. Glutamate 134, glutamate 136, glutamate 196, and glutamate 203 together coordinate Mn(2+). 203 to 208 (EFQIGP) serves as a coordination point for ATP. Position 246 to 247 (246 to 247 (NW)) interacts with L-glutamate. Histidine 253 contributes to the Mn(2+) binding site. ATP contacts are provided by residues 255–257 (NFS), arginine 319, and arginine 324. Residue arginine 319 participates in L-glutamate binding. 336–338 (YFE) is an ADP binding site. Mn(2+) is bound at residue glutamate 338. Arginine 340 serves as a coordination point for L-glutamate. Serine 343 carries the phosphoserine modification.

Belongs to the glutamine synthetase family. As to quaternary structure, decamer; composed of two pentamers. Interacts with PALMD. Interacts with RHOJ. Interacts with BEST2; this interaction tethers a fraction of GLUL to the membrane, causing a decrease of cytosolic glutamine synthase (GS) activity and inhibits the chloride channel activity of BEST2 by affecting the gating at the aperture in the absence of intracellular glutamate. Mg(2+) is required as a cofactor. The cofactor is Mn(2+). Post-translationally, palmitoylated; undergoes autopalmitoylation. Acetylated by EP300/p300; acetylation is stimulated by increased glutamine levels and promotes ubiquitin-mediated proteasomal degradation. In terms of processing, ubiquitinated by ZNRF1. Ubiquitinated by the DCX (DDB1-CUL4-X-box) E3 ubiquitin-protein ligase complex called CRL4(CRBN), leading to proteasomal degradation.

The protein resides in the cytoplasm. It localises to the cytosol. The protein localises to the microsome. Its subcellular location is the mitochondrion. It is found in the cell membrane. It catalyses the reaction L-glutamate + NH4(+) + ATP = L-glutamine + ADP + phosphate + H(+). It carries out the reaction L-cysteinyl-[protein] + hexadecanoyl-CoA = S-hexadecanoyl-L-cysteinyl-[protein] + CoA. Glutamine synthetase activity is inhibited by methionine sulfoximine (MSO). In terms of biological role, glutamine synthetase that catalyzes the ATP-dependent conversion of glutamate and ammonia to glutamine. Its role depends on tissue localization: in the brain, it regulates the levels of toxic ammonia and converts neurotoxic glutamate to harmless glutamine, whereas in the liver, it is one of the enzymes responsible for the removal of ammonia. Plays a key role in ammonium detoxification during erythropoiesis: the glutamine synthetase activity is required to remove ammonium generated by porphobilinogen deaminase (HMBS) during heme biosynthesis to prevent ammonium accumulation and oxidative stress. Essential for proliferation of fetal skin fibroblasts. Independently of its glutamine synthetase activity, required for endothelial cell migration during vascular development. Involved in angiogenesis by regulating membrane localization and activation of the GTPase RHOJ, possibly by promoting RHOJ palmitoylation. May act as a palmitoyltransferase for RHOJ: able to autopalmitoylate and then transfer the palmitoyl group to RHOJ. Plays a role in ribosomal 40S subunit biogenesis. Through the interaction with BEST2, inhibits BEST2 channel activity by affecting the gating at the aperture in the absence of intracellular L-glutamate, but sensitizes BEST2 to intracellular L-glutamate, which promotes the opening of BEST2 and thus relieves its inhibitory effect on BEST2. The polypeptide is Glutamine synthetase (Canis lupus familiaris (Dog)).